The primary structure comprises 285 residues: NAD kinase (285 aa).

Asp66 functions as the Proton acceptor in the catalytic mechanism. Residues 66-67 (DG), 137-138 (ND), Arg148, Arg165, Asp167, and 178-183 (TAYSMS) contribute to the NAD(+) site.

This sequence belongs to the NAD kinase family. The cofactor is a divalent metal cation.

The protein resides in the cytoplasm. It carries out the reaction NAD(+) + ATP = ADP + NADP(+) + H(+). In terms of biological role, involved in the regulation of the intracellular balance of NAD and NADP, and is a key enzyme in the biosynthesis of NADP. Catalyzes specifically the phosphorylation on 2'-hydroxyl of the adenosine moiety of NAD to yield NADP. The sequence is that of NAD kinase from Chlorobium phaeobacteroides (strain DSM 266 / SMG 266 / 2430).